Consider the following 181-residue polypeptide: ADP-ribosylation factor 1 (181 aa).

A lipid anchor (N-myristoyl glycine) is attached at Gly-2. GTP is bound by residues 24 to 31 (GLDAAGKT), 67 to 71 (DVGGQ), and 126 to 129 (NKQD).

It belongs to the small GTPase superfamily. Arf family.

The protein resides in the golgi apparatus. The enzyme catalyses GTP + H2O = GDP + phosphate + H(+). GTP-binding protein involved in protein trafficking; may modulate vesicle budding and uncoating within the Golgi apparatus. The chain is ADP-ribosylation factor 1 (ARF1) from Catharanthus roseus (Madagascar periwinkle).